A 202-amino-acid polypeptide reads, in one-letter code: Na(+)-translocating NADH-quinone reductase subunit E (202 aa).

Helical transmembrane passes span 11 to 31, 35 to 55, 81 to 101, 114 to 134, 144 to 164, and 182 to 202; these read SVFVKNMALAYFLGMCTFLAI, IDAAIGLGIAVVVVLTITVPV, FLGLICYIGVIAAIVQIMEMV, GVFLPLITVNCAILGAALLMV, VVFGVGSGVGWAFAIVALAGI, and ITFITVGLMSLGFMSFGGIAL.

It belongs to the NqrDE/RnfAE family. Composed of six subunits; NqrA, NqrB, NqrC, NqrD, NqrE and NqrF.

The protein localises to the cell inner membrane. The enzyme catalyses a ubiquinone + n Na(+)(in) + NADH + H(+) = a ubiquinol + n Na(+)(out) + NAD(+). Its function is as follows. NQR complex catalyzes the reduction of ubiquinone-1 to ubiquinol by two successive reactions, coupled with the transport of Na(+) ions from the cytoplasm to the periplasm. NqrA to NqrE are probably involved in the second step, the conversion of ubisemiquinone to ubiquinol. This Saccharophagus degradans (strain 2-40 / ATCC 43961 / DSM 17024) protein is Na(+)-translocating NADH-quinone reductase subunit E.